A 218-amino-acid chain; its full sequence is Small ribosomal subunit protein uS3 (218 aa).

A KH type-2 domain is found at 43–113; the sequence is IREHIERKLA…KVQVNVREVS (71 aa).

This sequence belongs to the universal ribosomal protein uS3 family. Part of the 30S ribosomal subunit. Forms a tight complex with proteins S10 and S14.

Functionally, binds the lower part of the 30S subunit head. Binds mRNA in the 70S ribosome, positioning it for translation. The sequence is that of Small ribosomal subunit protein uS3 from Rubrobacter xylanophilus (strain DSM 9941 / JCM 11954 / NBRC 16129 / PRD-1).